We begin with the raw amino-acid sequence, 393 residues long: Geranylgeranyl pyrophosphate synthase 2 (393 aa).

Residues lysine 109, arginine 112, and histidine 141 each contribute to the isopentenyl diphosphate site. Residues aspartate 148 and aspartate 152 each coordinate Mg(2+). Arginine 157 contacts dimethylallyl diphosphate. Position 158 (arginine 158) interacts with isopentenyl diphosphate. Residues lysine 235, threonine 236, and glutamine 275 each contribute to the dimethylallyl diphosphate site. Residue aspartate 278 coordinates Mg(2+). Asparagine 282, lysine 292, and lysine 302 together coordinate dimethylallyl diphosphate.

It belongs to the FPP/GGPP synthase family. Mg(2+) is required as a cofactor.

The catalysed reaction is isopentenyl diphosphate + dimethylallyl diphosphate = (2E)-geranyl diphosphate + diphosphate. It catalyses the reaction isopentenyl diphosphate + (2E)-geranyl diphosphate = (2E,6E)-farnesyl diphosphate + diphosphate. It carries out the reaction isopentenyl diphosphate + (2E,6E)-farnesyl diphosphate = (2E,6E,10E)-geranylgeranyl diphosphate + diphosphate. Its pathway is plant hormone biosynthesis; gibberellin biosynthesis. Its function is as follows. Geranylgeranyl pyrophosphate synthase; part of the gene cluster that mediates the biosynthesis of gibberellins (GAs), diterpenoids that may provide a selective advantage during infection of the preferred host plant, rice. Gibberellins (GAs) are diterpenoids and are synthesized via the mevalonate pathway. Biosynthesis of the major metabolite GA3 (gibberellic acid) from geranylgeranyl diphosphate (GGPP) requires 13 steps. The GGPP produced by the geranylgeranyl diphosphate synthase GGS2 is converted to ent-kaurene via ent-copalyldiphosphate in a two-step cyclization reaction performed by the bifunctional ent-copalyl diphosphate synthase/ent-kaurene synthase enzyme (CPS/KS). Ent-Kaurene is metabolized to GAs by a series of oxidation reactions catalyzed by cytochrome P450 monooxygenases. Cytochrome P450 monooxygenase P450-4 is an ent-kaurene oxidase that catalyzes the three oxidation steps between ent-kaurene and ent-kaurenoic acid. The highly multifunctional cytochrome P450 monooxygenase P450-1 then catalyzes four steps involving oxidation at two carbon atoms, in the main pathway from ent-kaurenoic acid to GA14 via GA12-aldehyde as well as producing kaurenolides and fujenoic acids as by-products. The cytochrome P450 monooxygenase P450-2 then converts GA14 to GA4 by removal of C-20. GA4 is further converted to GA7 by the GA4 desaturase DES via 1,2-desaturation before cytochrome P450 monooxygenase P450-3, a 13-hydroxylase, hydroxylates GA7 to GA3, the final product of the GA-biosynthetic pathway. The chain is Geranylgeranyl pyrophosphate synthase 2 from Gibberella fujikuroi (strain CBS 195.34 / IMI 58289 / NRRL A-6831) (Bakanae and foot rot disease fungus).